Consider the following 365-residue polypeptide: Growth-regulating factor 7 (365 aa).

A QLQ domain is found at 59 to 94 (PFTNAQLKELERQAMIYKYMIASIPVPFDLLVSSPS). The 45-residue stretch at 107–151 (DLEPGRCRRTDGKKWRCAKEVVSNHKYCEKHLHRGRPRSRKHVEP) folds into the WRC domain. 2 consecutive short sequence motifs (bipartite nuclear localization signal) follow at residues 112-122 (RCRRTDGKKWR) and 140-147 (RGRPRSRK). Basic residues predominate over residues 137 to 147 (HLHRGRPRSRK). 2 disordered regions span residues 137–187 (HLHR…TLEP) and 332–365 (IESY…SSQV). The segment covering 337-365 (LMETPTPSSSPSRVMKKMTSSVSDESSQV) has biased composition (polar residues).

This sequence belongs to the GRF family.

Its subcellular location is the nucleus. Transcription activator that plays a role in the regulation of cell expansion in leaf and cotyledons tissues. Component of a network formed by miR396, the GRFs and their interacting factors (GIFs) acting in the regulation of meristem function, at least partially through the control of cell proliferation. The polypeptide is Growth-regulating factor 7 (GRF7) (Arabidopsis thaliana (Mouse-ear cress)).